The primary structure comprises 197 residues: dITP/XTP pyrophosphatase (197 aa).

9–14 (SNNAGK) contributes to the substrate binding site. The active-site Proton acceptor is the aspartate 70. Mg(2+) is bound at residue aspartate 70. Residues serine 71, 153 to 156 (FGYD), lysine 176, and 181 to 182 (HR) contribute to the substrate site.

This sequence belongs to the HAM1 NTPase family. As to quaternary structure, homodimer. Mg(2+) is required as a cofactor.

It catalyses the reaction XTP + H2O = XMP + diphosphate + H(+). It carries out the reaction dITP + H2O = dIMP + diphosphate + H(+). The enzyme catalyses ITP + H2O = IMP + diphosphate + H(+). Its function is as follows. Pyrophosphatase that catalyzes the hydrolysis of nucleoside triphosphates to their monophosphate derivatives, with a high preference for the non-canonical purine nucleotides XTP (xanthosine triphosphate), dITP (deoxyinosine triphosphate) and ITP. Seems to function as a house-cleaning enzyme that removes non-canonical purine nucleotides from the nucleotide pool, thus preventing their incorporation into DNA/RNA and avoiding chromosomal lesions. In Chromobacterium violaceum (strain ATCC 12472 / DSM 30191 / JCM 1249 / CCUG 213 / NBRC 12614 / NCIMB 9131 / NCTC 9757 / MK), this protein is dITP/XTP pyrophosphatase.